Here is a 55-residue protein sequence, read N- to C-terminus: Small ribosomal subunit protein eS31 (55 aa).

Positions 21, 24, 39, and 42 each coordinate Zn(2+). The segment at 21-42 adopts a C4-type zinc-finger fold; it reads CPRCGPGVFLAEHADRFTCGRC.

Belongs to the eukaryotic ribosomal protein eS31 family. As to quaternary structure, part of the 30S ribosomal subunit. It depends on Zn(2+) as a cofactor.

The chain is Small ribosomal subunit protein eS31 from Thermoplasma volcanium (strain ATCC 51530 / DSM 4299 / JCM 9571 / NBRC 15438 / GSS1).